We begin with the raw amino-acid sequence, 257 residues long: Acetylglutamate kinase (257 aa).

Residues 43 to 44 (GG), R65, and N157 contribute to the substrate site. ATP is bound by residues 180-185 (DVSGIL) and 208-210 (IIT).

This sequence belongs to the acetylglutamate kinase family. ArgB subfamily. Homodimer.

Its subcellular location is the cytoplasm. The enzyme catalyses N-acetyl-L-glutamate + ATP = N-acetyl-L-glutamyl 5-phosphate + ADP. The protein operates within amino-acid biosynthesis; L-arginine biosynthesis; N(2)-acetyl-L-ornithine from L-glutamate: step 2/4. Functionally, catalyzes the ATP-dependent phosphorylation of N-acetyl-L-glutamate. The polypeptide is Acetylglutamate kinase (Pectobacterium carotovorum subsp. carotovorum (strain PC1)).